The primary structure comprises 156 residues: Small ribosomal subunit protein uS7 (156 aa).

The protein belongs to the universal ribosomal protein uS7 family. As to quaternary structure, part of the 30S ribosomal subunit. Contacts proteins S9 and S11.

One of the primary rRNA binding proteins, it binds directly to 16S rRNA where it nucleates assembly of the head domain of the 30S subunit. Is located at the subunit interface close to the decoding center, probably blocks exit of the E-site tRNA. The polypeptide is Small ribosomal subunit protein uS7 (Phytoplasma australiense).